A 498-amino-acid chain; its full sequence is NADP-dependent glyceraldehyde-3-phosphate dehydrogenase (498 aa).

Substrate is bound by residues arginine 118 and 171–172 (NY). Residues lysine 194, threonine 197, and aspartate 232 each contribute to the NADP(+) site. 247-251 (GGDTG) is an NAD(+) binding site. Glutamate 266 acts as the Proton acceptor in catalysis. Substrate is bound at residue 299–301 (RCT). Cysteine 300 serves as the catalytic Nucleophile. Glutamate 393 is an NADP(+) binding site. Arginine 453 is a binding site for substrate.

Belongs to the aldehyde dehydrogenase family.

The protein resides in the cytoplasm. The enzyme catalyses D-glyceraldehyde 3-phosphate + NADP(+) + H2O = (2R)-3-phosphoglycerate + NADPH + 2 H(+). Its function is as follows. Important as a means of generating NADPH for biosynthetic reactions. The polypeptide is NADP-dependent glyceraldehyde-3-phosphate dehydrogenase (GPN1) (Zea mays (Maize)).